The following is a 403-amino-acid chain: Acetate kinase (403 aa).

Residue Asn7 coordinates Mg(2+). Lys14 contacts ATP. Arg90 is a binding site for substrate. The active-site Proton donor/acceptor is Asp147. ATP contacts are provided by residues 207–211 (HIGNG), 283–285 (DMR), and 331–335 (GVGEN). Residue Glu386 coordinates Mg(2+).

Belongs to the acetokinase family. In terms of assembly, homodimer. Requires Mg(2+) as cofactor. The cofactor is Mn(2+).

It is found in the cytoplasm. The enzyme catalyses acetate + ATP = acetyl phosphate + ADP. The protein operates within metabolic intermediate biosynthesis; acetyl-CoA biosynthesis; acetyl-CoA from acetate: step 1/2. Catalyzes the formation of acetyl phosphate from acetate and ATP. Can also catalyze the reverse reaction. Phosphorylates propionate (54%) in addition to acetate (100%). Uses GTP (100%), ITP (163%), UTP (56%), and CTP (21%) as phosphoryl donors in addition to ATP (100%). In Thermotoga maritima (strain ATCC 43589 / DSM 3109 / JCM 10099 / NBRC 100826 / MSB8), this protein is Acetate kinase.